Reading from the N-terminus, the 752-residue chain is Reticulon-1-B (752 aa).

Disordered regions lie at residues 1-57 (MAAN…TSTD), 264-319 (EYPG…SEKQ), 334-424 (KAKE…SPSI), and 444-465 (ESCDGSSASEESPKRDPDSPMM). The segment covering 264 to 273 (EYPGNQQGKS) has biased composition (polar residues). Residues 334–361 (KAKEGTKRFSSETNDEKQSRSFHAEKQD) show a composition bias toward basic and acidic residues. Over residues 363–383 (TVMSTEATSASHYTKASSAES) the composition is skewed to polar residues. One can recognise a Reticulon domain in the interval 566–752 (AIDLLYWRDV…AKIPGTKQKE (187 aa)). The next 2 membrane-spanning stretches (helical) occupy residues 580 to 600 (IVFGSILLMLFSLTLFSVVSV) and 684 to 704 (VLMWLLTYVGALFNGLTLLIM).

As to expression, isoform A and isoform C are both expressed in the animal hemisphere (presumptive neural ectoderm) of blastula and gastrula stage embryos, and along the anterior neural border, in the panplacodal primordium, and in the dorsolateral side of archenteron roof of late neurula embryos. At the tailbud stage, expression of the isoforms begin to differ. Isoform A localizes to the cranial placodes including the trigeminal placode, lateral line placode, olfactory placode and otic vesicle. Isoform C localizes to the central nervous system, including the spinal cord, prosencephalon, mesencephalon and rhombencephalon, as well as the lateral line placode, otic vesicle and pronephros.

The protein localises to the endoplasmic reticulum membrane. It is found in the nucleus. In terms of biological role, inhibits amyloid precursor protein processing, probably by blocking BACE1 activity. The polypeptide is Reticulon-1-B (rtn1-b) (Xenopus laevis (African clawed frog)).